The primary structure comprises 326 residues: Serine hydrolase-like protein (326 aa).

The AB hydrolase-1 domain maps to 44 to 155; it reads PVLCLHGWAD…FLPTEVTDMF (112 aa). Serine 118 is a catalytic residue.

It belongs to the AB hydrolase superfamily.

Probable serine hydrolase. In Danio rerio (Zebrafish), this protein is Serine hydrolase-like protein (serhl).